Reading from the N-terminus, the 415-residue chain is Serine/threonine transporter SstT (415 aa).

A run of 9 helical transmembrane segments spans residues 21–41, 45–65, 83–103, 142–162, 193–213, 217–237, 299–319, 331–351, and 358–378; these read ILLGLAAGIILASLSTQAALA, LGTLFVGALKAVAPILVLMLV, ILFLYLIGTFSAALIAVVLSV, ALLNANYIGILVWAVGLGLAF, LGIFGLVASTLAETGFGALWG, LLMVLIGGMLLVALVINPLIV, MAGAAITITVLALAAVHTLGI, VVASICACGASGVAGGSLLLI, and FGISNDIAMQVVAVGFIIGVL.

This sequence belongs to the dicarboxylate/amino acid:cation symporter (DAACS) (TC 2.A.23) family.

The protein localises to the cell inner membrane. The enzyme catalyses L-serine(in) + Na(+)(in) = L-serine(out) + Na(+)(out). It catalyses the reaction L-threonine(in) + Na(+)(in) = L-threonine(out) + Na(+)(out). Its function is as follows. Involved in the import of serine and threonine into the cell, with the concomitant import of sodium (symport system). The chain is Serine/threonine transporter SstT from Pectobacterium carotovorum subsp. carotovorum (strain PC1).